The primary structure comprises 212 residues: 2-hydroxychromene-2-carboxylate isomerase (212 aa).

Serine 24 acts as the Nucleophile in catalysis. A glutathione-binding site is contributed by serine 24. Residues lysine 56, 66-67 (NR), and tyrosine 97 contribute to the substrate site. Residues valine 181 and 192 to 195 (WGND) each bind glutathione.

The protein belongs to the GST superfamily. NadH family. Requires glutathione as cofactor.

It catalyses the reaction 2-hydroxychromene-2-carboxylate = (3E)-4-(2-hydroxyphenyl)-2-oxobut-3-enoate. The protein operates within aromatic compound metabolism; naphthalene degradation. Functionally, involved in the naphthalene catabolic pathway. Catalyzes the reversible glutathione-dependent isomerization of 2-hydroxychromene-2-carboxylate (HCCA) to trans-O-hydroxybenzylidenepyruvate (THBPA). This Pseudomonas sp. (strain C18) protein is 2-hydroxychromene-2-carboxylate isomerase (doxJ).